The chain runs to 423 residues: Protein FAM43A (423 aa).

Positions 263–283 (EQELQEEEEEEQPEGCPEEEE) are enriched in acidic residues. Disordered regions lie at residues 263 to 298 (EQEL…EAEA), 321 to 344 (RGEA…LLLG), and 382 to 423 (LSGD…PHSG). The segment covering 323–335 (EALGGGGGSLGPG) has biased composition (gly residues). Residues 383-393 (SGDSTGSESSI) are compositionally biased toward low complexity. Residues 401-411 (TSATAGDSSRQ) are compositionally biased toward polar residues.

It belongs to the FAM43 family.

This chain is Protein FAM43A (FAM43A), found in Homo sapiens (Human).